A 332-amino-acid chain; its full sequence is MGVIKKKRSHHGKASRQQYYSGVQVGGVGSMGAINNNIPSLTSFAEENNYQYGYSGSSAGMNGRSLTYAQQQLNKQRQDFERVRLRPEQLSNIIHDESDTISFRSNLLKNFISSNDAFNMLSLTTVPCDRIEKSRLFSEKTIRYLMQKQHEMKTQAAELQEKPLTPLKYTKLIAAAEDGSRSTKDMIDAVFEQDSHLRYQPDGVVVHRDDPALVGKLRGDLREAPADYWTHAYRDVLAQYHEAKERIRQKEVTAGEAQDEASLQQQQQQDLQQQQQVVTTVASQSPHATATEKEPVPAVVDDPLENMFGDYSNEPFNTNFDDEFGDLDAVFF.

A Nuclear localization signal motif is present at residues 2–8 (GVIKKKR). Residue T165 is modified to Phosphothreonine. A disordered region spans residues 278–299 (VTTVASQSPHATATEKEPVPAV).

As to quaternary structure, component of the SWI/SNF global transcription activator complex. The 1.14 MDa SWI/SNF complex is composed of 11 different subunits: one copy each of SWI1, SNF2/SWI2, SNF5, SNF12/SWP73, ARP7/SWP61, ARP9/SWP59; two copies each of SWI3, SNF6, SNF11, SWP82; and three copies of TAF14/SWP29.

The protein localises to the nucleus. Its function is as follows. Involved in transcriptional activation. Component of the SWI/SNF complex, an ATP-dependent chromatin remodeling complex, which is required for the positive and negative regulation of gene expression of a large number of genes. It changes chromatin structure by altering DNA-histone contacts within a nucleosome, leading eventually to a change in nucleosome position, thus facilitating or repressing binding of gene-specific transcription factors. The chain is Transcription regulatory protein SNF6 (SNF6) from Saccharomyces cerevisiae (strain ATCC 204508 / S288c) (Baker's yeast).